The following is a 194-amino-acid chain: Recombination protein RecR (194 aa).

Residues 55–70 (CRECGNLAEGELCPIC) form a C4-type zinc finger. A Toprim domain is found at 78-171 (SLLAVVESVA…RVTRPAYGLP (94 aa)).

The protein belongs to the RecR family.

In terms of biological role, may play a role in DNA repair. It seems to be involved in an RecBC-independent recombinational process of DNA repair. It may act with RecF and RecO. The chain is Recombination protein RecR from Thermus thermophilus (strain ATCC BAA-163 / DSM 7039 / HB27).